Consider the following 1252-residue polypeptide: DNA-directed RNA polymerase subunit beta (1252 aa).

Belongs to the RNA polymerase beta chain family. As to quaternary structure, the RNAP catalytic core consists of 2 alpha, 1 beta, 1 beta' and 1 omega subunit. When a sigma factor is associated with the core the holoenzyme is formed, which can initiate transcription.

The catalysed reaction is RNA(n) + a ribonucleoside 5'-triphosphate = RNA(n+1) + diphosphate. In terms of biological role, DNA-dependent RNA polymerase catalyzes the transcription of DNA into RNA using the four ribonucleoside triphosphates as substrates. The polypeptide is DNA-directed RNA polymerase subunit beta (Chlamydia muridarum (strain MoPn / Nigg)).